Reading from the N-terminus, the 449-residue chain is Xylose isomerase (449 aa).

Residues histidine 103 and aspartate 106 contribute to the active site. Mg(2+) contacts are provided by glutamate 234, glutamate 270, histidine 273, aspartate 298, aspartate 309, aspartate 311, and aspartate 342.

Belongs to the xylose isomerase family. In terms of assembly, homotetramer. Requires Mg(2+) as cofactor.

Its subcellular location is the cytoplasm. It catalyses the reaction alpha-D-xylose = alpha-D-xylulofuranose. In Levilactobacillus brevis (Lactobacillus brevis), this protein is Xylose isomerase.